Here is a 360-residue protein sequence, read N- to C-terminus: NADH-quinone oxidoreductase subunit H (360 aa).

The next 8 helical transmembrane spans lie at 22-42, 97-117, 130-150, 170-190, 208-228, 255-275, 292-312, and 336-356; these read ITVG…IPLI, ALFY…WAVI, IGLL…IIAG, ISYE…SGSM, VFSW…ISAV, GFAF…IAAL, WGFI…AVLY, and VLIP…ISPL.

It belongs to the complex I subunit 1 family. In terms of assembly, NDH-1 is composed of 14 different subunits. Subunits NuoA, H, J, K, L, M, N constitute the membrane sector of the complex.

It is found in the cell inner membrane. The enzyme catalyses a quinone + NADH + 5 H(+)(in) = a quinol + NAD(+) + 4 H(+)(out). Functionally, NDH-1 shuttles electrons from NADH, via FMN and iron-sulfur (Fe-S) centers, to quinones in the respiratory chain. The immediate electron acceptor for the enzyme in this species is believed to be ubiquinone. Couples the redox reaction to proton translocation (for every two electrons transferred, four hydrogen ions are translocated across the cytoplasmic membrane), and thus conserves the redox energy in a proton gradient. This subunit may bind ubiquinone. The chain is NADH-quinone oxidoreductase subunit H from Neisseria meningitidis serogroup C / serotype 2a (strain ATCC 700532 / DSM 15464 / FAM18).